The chain runs to 485 residues: MDLTKLTAHELKDILSNKEVKAEEITRAFLDRINLVDNKLGAYLYVSEEEAIKKAKEIDVKIEKNEELKALSGIPVGIKDNINVKGMQNTCASKILQGYTSPYDAHVTEKIKKEEGIILGKLNMDEFAMGSSTENSAFKLAKNPWDLERVPGGSSGGSAVAVAGCEATLSLGTDTGGSVRQPASFCGIVGLKPTYGRISRSGVVAFGSTLDQVGPMGKDVEDCALLTSAIAGLDKKDFTTADKEVPDYKKSLTKDIKGKKIGIPKEFFGEGLDEKVRKSVEEAIKVLEENGAEVKPCSLPLMDYALSAYYIISSAEASSNLARFDGIRYGHRSKNFKDAQDIYLKSRSEGFGDEVKRRIMLGTYVLSAGYYDAYYKKALKVRKLIKDDFQRVFKDFDAIVSPTSPTTAFKVGEKKDDVMSMYLSDIYTVPISVAGVPAISLPCGMIDGLPVGLQIISDYFKEDVLFNLAYNYEQSVDFHKMRADF.

Residues Lys-79 and Ser-154 each act as charge relay system in the active site. The Acyl-ester intermediate role is filled by Ser-178.

Belongs to the amidase family. GatA subfamily. In terms of assembly, heterotrimer of A, B and C subunits.

The catalysed reaction is L-glutamyl-tRNA(Gln) + L-glutamine + ATP + H2O = L-glutaminyl-tRNA(Gln) + L-glutamate + ADP + phosphate + H(+). Allows the formation of correctly charged Gln-tRNA(Gln) through the transamidation of misacylated Glu-tRNA(Gln) in organisms which lack glutaminyl-tRNA synthetase. The reaction takes place in the presence of glutamine and ATP through an activated gamma-phospho-Glu-tRNA(Gln). In Clostridium botulinum (strain Kyoto / Type A2), this protein is Glutamyl-tRNA(Gln) amidotransferase subunit A.